Consider the following 452-residue polypeptide: Septin-10 (452 aa).

Positions 36 to 302 (QGFCFNILCV…ELYRRCKLQE (267 aa)) constitute a Septin-type G domain. Residues 46 to 53 (GETGIGKS) are G1 motif. GTP-binding positions include 46-53 (GETGIGKS), Gly-101, 182-190 (KADTISKSE), Gly-236, and Arg-251. The interval 98–101 (NTVG) is G3 motif. A G4 motif region spans residues 181–184 (AKAD). Position 414 is a phosphoserine (Ser-414).

The protein belongs to the TRAFAC class TrmE-Era-EngA-EngB-Septin-like GTPase superfamily. Septin GTPase family. As to quaternary structure, septins polymerize into heterooligomeric protein complexes that form filaments, and can associate with cellular membranes, actin filaments and microtubules. GTPase activity is required for filament formation. Interacts with ADGB. Proteolytically cleaved in vitro in a calmodulin-dependent manner.

It localises to the cytoplasm. The protein resides in the cytoskeleton. The protein localises to the cell projection. Its subcellular location is the cilium. It is found in the flagellum. Its function is as follows. Filament-forming cytoskeletal GTPase. May play a role in cytokinesis (Potential). In Mus musculus (Mouse), this protein is Septin-10.